Here is a 116-residue protein sequence, read N- to C-terminus: Ribonuclease P protein component (116 aa).

This sequence belongs to the RnpA family. Consists of a catalytic RNA component (M1 or rnpB) and a protein subunit.

It carries out the reaction Endonucleolytic cleavage of RNA, removing 5'-extranucleotides from tRNA precursor.. Functionally, RNaseP catalyzes the removal of the 5'-leader sequence from pre-tRNA to produce the mature 5'-terminus. It can also cleave other RNA substrates such as 4.5S RNA. The protein component plays an auxiliary but essential role in vivo by binding to the 5'-leader sequence and broadening the substrate specificity of the ribozyme. This chain is Ribonuclease P protein component, found in Thermoanaerobacter pseudethanolicus (strain ATCC 33223 / 39E) (Clostridium thermohydrosulfuricum).